The chain runs to 333 residues: Probable G-protein coupled receptor 33 (333 aa).

Topologically, residues 1–30 are extracellular; sequence MDLINSTDYLINASTLVRNSTQFLAPASKM. N5, N12, and N19 each carry an N-linked (GlcNAc...) asparagine glycan. Residues 31–53 traverse the membrane as a helical segment; sequence IIALSLYISSIIGTITNGLYLWV. Over 54-64 the chain is Cytoplasmic; sequence LRFKMKQTVNT. Residues 65 to 86 traverse the membrane as a helical segment; sequence LLFFHLILSYFISTMILPFMAT. Residues 87 to 103 are Extracellular-facing; sequence SQLQDNHWNFGTALCKV. C101 and C179 are joined by a disulfide. A helical transmembrane segment spans residues 104 to 124; it reads FNGTLSLGMFTSVFFLSAIGL. The Cytoplasmic portion of the chain corresponds to 125–143; sequence DRYLLTLHPVWSQQHRTPR. Residues 144 to 165 traverse the membrane as a helical segment; sequence WASSIVLGVWISAAALSIPYLI. The Extracellular segment spans residues 166–209; that stretch reads FRETHHDRKGKVTCQNNYAVSTNWESKEMQASRQWIHVACFISR. Residues 210-230 form a helical membrane-spanning segment; it reads FLLGFLLPFFIIIFCYERVAS. Residues 231–246 lie on the Cytoplasmic side of the membrane; that stretch reads KVKERSLFKSSKPFKV. Residues 247–268 form a helical membrane-spanning segment; the sequence is MMTAIISFFVCWMPYHIHQGLL. Topologically, residues 269-283 are extracellular; the sequence is LTTNQSLLLELTLIL. N272 carries an N-linked (GlcNAc...) asparagine glycan. The chain crosses the membrane as a helical span at residues 284 to 303; the sequence is TVLTTSFNTIFSPTLYLFVG. At 304 to 333 the chain is on the cytoplasmic side; sequence ENFKKVFKKSILALFESTFSEDSSVERTQT.

Belongs to the G-protein coupled receptor 1 family. In terms of tissue distribution, expressed in spleen, lung, heart, liver, kidney, pancreas, thymus, gonads and leukocytes.

The protein resides in the cell membrane. In terms of biological role, orphan receptor; could be a chemoattractant receptor. The chain is Probable G-protein coupled receptor 33 (GPR33) from Homo sapiens (Human).